The sequence spans 295 residues: Nucleotide-binding protein SSU98_0619 (295 aa).

12-19 (GMSGAGKT) contacts ATP. Residue 62 to 65 (DMRS) coordinates GTP.

It belongs to the RapZ-like family.

In terms of biological role, displays ATPase and GTPase activities. This Streptococcus suis (strain 98HAH33) protein is Nucleotide-binding protein SSU98_0619.